The following is a 288-amino-acid chain: MAGAKEIRSKISSINKTRKITRAMEMVAASKMRKTQERMRASKPYANKIYEVIKHIARAASEYRHPFMSEREIKRIGIIVVTTDRGLCGGLNSNLFRETIRTIRNWQEHGKEVDIAVIGRKGQAFFRRVGGNILGSIDHLGDTPSINDFIGVVKIMLDAYYNGTIDSLHIVYNEFINTMTQKPFVKQLLPLPKSEEDKKTLGHHWDYIYEPEAKELLDEILERYIELQVYQAVVENIACEQAAKMIAMKSATDNAGDLIKEFQLAYNKARQAAITQELAEIVGGAAAL.

The protein belongs to the ATPase gamma chain family. In terms of assembly, F-type ATPases have 2 components, CF(1) - the catalytic core - and CF(0) - the membrane proton channel. CF(1) has five subunits: alpha(3), beta(3), gamma(1), delta(1), epsilon(1). CF(0) has three main subunits: a, b and c.

It localises to the cell inner membrane. Its function is as follows. Produces ATP from ADP in the presence of a proton gradient across the membrane. The gamma chain is believed to be important in regulating ATPase activity and the flow of protons through the CF(0) complex. This is ATP synthase gamma chain from Legionella pneumophila (strain Corby).